Reading from the N-terminus, the 237-residue chain is NADPH-dependent FMN reductase ArsH (237 aa).

Residues 39-46 (SNRECSYS) and 102-107 (SPERHG) contribute to the FMN site.

It belongs to the ArsH family. In terms of assembly, homotetramer. FMN is required as a cofactor.

Functionally, has NADPH-dependent FMN reductase activity and high NADPH-dependent ferric reductase activity with highest activity for Fe(3+) as substrate. No activity with NADH, iron trichloride, Cu(2+) or Ag(+). May be involved in cytosolic ferric iron assimilation as an NADPH-dependent ferric reductase in vivo. The sequence is that of NADPH-dependent FMN reductase ArsH from Acidithiobacillus ferrooxidans (strain ATCC 23270 / DSM 14882 / CIP 104768 / NCIMB 8455) (Ferrobacillus ferrooxidans (strain ATCC 23270)).